The chain runs to 105 residues: Large ribosomal subunit protein uL24 (105 aa).

This sequence belongs to the universal ribosomal protein uL24 family. As to quaternary structure, part of the 50S ribosomal subunit.

Its function is as follows. One of two assembly initiator proteins, it binds directly to the 5'-end of the 23S rRNA, where it nucleates assembly of the 50S subunit. In terms of biological role, one of the proteins that surrounds the polypeptide exit tunnel on the outside of the subunit. In Staphylococcus aureus (strain Mu3 / ATCC 700698), this protein is Large ribosomal subunit protein uL24.